The chain runs to 490 residues: Betaine aldehyde dehydrogenase (490 aa).

Residue Asn-93 participates in K(+) binding. Position 150–152 (150–152 (GAW)) interacts with NAD(+). Catalysis depends on Lys-162, which acts as the Charge relay system. NAD(+) is bound at residue 176–179 (KPSE). A K(+)-binding site is contributed by Val-180. NAD(+) is bound at residue 230–233 (GTAT). Position 246 (Leu-246) interacts with K(+). Residue Glu-252 is the Proton acceptor of the active site. Gly-254, Cys-286, and Glu-387 together coordinate NAD(+). Residue Cys-286 is the Nucleophile of the active site. Cys-286 is subject to Cysteine sulfenic acid (-SOH). K(+)-binding residues include Lys-457 and Gly-460. The active-site Charge relay system is the Glu-464.

This sequence belongs to the aldehyde dehydrogenase family. As to quaternary structure, dimer of dimers. Requires K(+) as cofactor.

The catalysed reaction is betaine aldehyde + NAD(+) + H2O = glycine betaine + NADH + 2 H(+). It functions in the pathway amine and polyamine biosynthesis; betaine biosynthesis via choline pathway; betaine from betaine aldehyde: step 1/1. Its function is as follows. Involved in the biosynthesis of the osmoprotectant glycine betaine. Catalyzes the irreversible oxidation of betaine aldehyde to the corresponding acid. This Xanthomonas euvesicatoria pv. vesicatoria (strain 85-10) (Xanthomonas campestris pv. vesicatoria) protein is Betaine aldehyde dehydrogenase.